The following is a 252-amino-acid chain: Protein UL24 homolog (252 aa).

Residues 211–252 (KASKSVLTKTSGENRSRASRQVAKNAPKNRIRRTAKKDAKRQ) are disordered. Polar residues predominate over residues 212–223 (ASKSVLTKTSGE). Residues 237–252 (PKNRIRRTAKKDAKRQ) are compositionally biased toward basic residues.

It belongs to the herpesviridae UL24 family.

The protein resides in the virion. The protein localises to the host cytoplasm. It is found in the host nucleus. It localises to the host nucleolus. Its subcellular location is the host Golgi apparatus. Functionally, may participate in nuclear egress of viral particles. Plays a role in the dispersal of several host nucleolar proteins including NCL/nucleolin and NPM1. Since deletion of host NCL/nucleolin negatively impact on nuclear egress, UL24 supposedly acts on this process through its effect on host nucleoli. The polypeptide is Protein UL24 homolog (U49) (Homo sapiens (Human)).